The primary structure comprises 135 residues: NADPH-dependent 7-cyano-7-deazaguanine reductase (135 aa).

The active-site Thioimide intermediate is the cysteine 48. The Proton donor role is filled by aspartate 55. Residues isoleucine 70 to leucine 72 and histidine 89 to glutamate 90 contribute to the substrate site.

It belongs to the GTP cyclohydrolase I family. QueF type 1 subfamily.

The protein resides in the cytoplasm. The catalysed reaction is 7-aminomethyl-7-carbaguanine + 2 NADP(+) = 7-cyano-7-deazaguanine + 2 NADPH + 3 H(+). The protein operates within tRNA modification; tRNA-queuosine biosynthesis. Its function is as follows. Catalyzes the NADPH-dependent reduction of 7-cyano-7-deazaguanine (preQ0) to 7-aminomethyl-7-deazaguanine (preQ1). The protein is NADPH-dependent 7-cyano-7-deazaguanine reductase of Prochlorococcus marinus (strain MIT 9303).